A 170-amino-acid polypeptide reads, in one-letter code: Phosphopantetheine adenylyltransferase (170 aa).

Threonine 9 is a substrate binding site. Residues 9–10 (TF) and histidine 17 each bind ATP. Substrate is bound by residues lysine 41, leucine 73, and arginine 87. ATP is bound by residues 88–90 (GLR), glutamate 98, and 123–129 (YQFISGT).

The protein belongs to the bacterial CoaD family. Homohexamer. The cofactor is Mg(2+).

The protein resides in the cytoplasm. It carries out the reaction (R)-4'-phosphopantetheine + ATP + H(+) = 3'-dephospho-CoA + diphosphate. It functions in the pathway cofactor biosynthesis; coenzyme A biosynthesis; CoA from (R)-pantothenate: step 4/5. Its function is as follows. Reversibly transfers an adenylyl group from ATP to 4'-phosphopantetheine, yielding dephospho-CoA (dPCoA) and pyrophosphate. The polypeptide is Phosphopantetheine adenylyltransferase (Bordetella petrii (strain ATCC BAA-461 / DSM 12804 / CCUG 43448)).